Consider the following 111-residue polypeptide: MSLLPRRAPPVSMRLLAAALLLLLLALYTARVDGSKCKCSRKGPKIRYSDVKKLEMKPKYPHCEEKMVIITTKSVSRYRGQEHCLHPKLQSTKRFIKWYNAWNEKRRVYEE.

Positions Met-1–Gly-34 are cleaved as a signal peptide. Intrachain disulfides connect Cys-37–Cys-63 and Cys-39–Cys-84. Positions Met-67–Gln-81 match the D-box motif.

Belongs to the intercrine alpha (chemokine CxC) family. Ubiquitinated, followed by degradation by the proteasome. As to expression, expressed in heart, brain, placenta, lung, liver, skeletal muscle, kidney and pancreas. Highly expressed in normal tissue without inflammatory stimuli and infrequently expressed in cancer cell lines. Weakly expressed in monocyte-derived dendritic cells. Not detected in lung or unstimulated peripheral blood lymphocytes.

Its subcellular location is the secreted. In terms of biological role, potent chemoattractant for neutrophils, and weaker for dendritic cells. Not chemotactic for T-cells, B-cells, monocytes, natural killer cells or granulocytes. Does not inhibit proliferation of myeloid progenitors in colony formation assays. The sequence is that of C-X-C motif chemokine 14 (CXCL14) from Homo sapiens (Human).